A 353-amino-acid polypeptide reads, in one-letter code: Photosystem II protein D1 (353 aa).

An N-acetylthreonine modification is found at T2. T2 bears the Phosphothreonine mark. 3 consecutive transmembrane segments (helical) span residues 29-46 (YIGWFGVLMIPTLLTATS), 118-133 (HFLLGVACYMGREWEL), and 142-156 (WIAVAYSAPVAAATA). Chlorophyll a is bound at residue H118. Pheophytin a is bound at residue Y126. [CaMn4O5] cluster is bound by residues D170 and E189. Residues 197–218 (FHMLGVAGVFGGSLFSAMHGSL) traverse the membrane as a helical segment. H198 provides a ligand contact to chlorophyll a. Residues H215 and 264 to 265 (SF) each bind a quinone. Residue H215 coordinates Fe cation. H272 serves as a coordination point for Fe cation. A helical membrane pass occupies residues 274 to 288 (FLAAWPVVGIWFTAL). 4 residues coordinate [CaMn4O5] cluster: H332, E333, D342, and A344. A propeptide spanning residues 345-353 (GVEVPSTNG) is cleaved from the precursor.

This sequence belongs to the reaction center PufL/M/PsbA/D family. PSII is composed of 1 copy each of membrane proteins PsbA, PsbB, PsbC, PsbD, PsbE, PsbF, PsbH, PsbI, PsbJ, PsbK, PsbL, PsbM, PsbT, PsbX, PsbY, PsbZ, Psb30/Ycf12, at least 3 peripheral proteins of the oxygen-evolving complex and a large number of cofactors. It forms dimeric complexes. The D1/D2 heterodimer binds P680, chlorophylls that are the primary electron donor of PSII, and subsequent electron acceptors. It shares a non-heme iron and each subunit binds pheophytin, quinone, additional chlorophylls, carotenoids and lipids. D1 provides most of the ligands for the Mn4-Ca-O5 cluster of the oxygen-evolving complex (OEC). There is also a Cl(-1) ion associated with D1 and D2, which is required for oxygen evolution. The PSII complex binds additional chlorophylls, carotenoids and specific lipids. serves as cofactor. Post-translationally, tyr-161 forms a radical intermediate that is referred to as redox-active TyrZ, YZ or Y-Z. In terms of processing, C-terminally processed by CTPA; processing is essential to allow assembly of the oxygen-evolving complex and thus photosynthetic growth.

The protein localises to the plastid. Its subcellular location is the chloroplast thylakoid membrane. It carries out the reaction 2 a plastoquinone + 4 hnu + 2 H2O = 2 a plastoquinol + O2. Photosystem II (PSII) is a light-driven water:plastoquinone oxidoreductase that uses light energy to abstract electrons from H(2)O, generating O(2) and a proton gradient subsequently used for ATP formation. It consists of a core antenna complex that captures photons, and an electron transfer chain that converts photonic excitation into a charge separation. The D1/D2 (PsbA/PsbD) reaction center heterodimer binds P680, the primary electron donor of PSII as well as several subsequent electron acceptors. The chain is Photosystem II protein D1 from Morus indica (Mulberry).